Here is a 341-residue protein sequence, read N- to C-terminus: MAHARISMYMPPDIDPTKAAIAYGCRALSKLNEELQSRDLLTRQKALVALCDLMHDPEYVYEAINIGCLESLKTLLQDDDNLVRIKTTEVLYIMATHYVGRVGFLKHDIIQALSLLLSDHQTLCRENLHQAYKHLAQLPKGAQGIVQSGLIPSLVRKLQKEEDHIQEIILDTLALCLQEDATEALESQAVPCLKEKLLSQNSEIRSKAARALIAISIPLDGKNQVWKNKVIPILVTLLSDTDEEVKANAAGALMHATVTTEGKYAALDANAIEPLLELLSTNPKTKLCLNATKALTMLAEAPEGRKLLLSHVPIFRYLLAHKNEAIQRAAEVAIKVIEWKP.

ARM repeat units follow at residues 16–55 (PTKA…DLMH), 57–96 (PEYV…IMAT), 99–138 (VGRV…LAQL), 139–178 (PKGA…LCLQ), 180–217 (DATE…AISI), 219–258 (LDGK…HATV), 260–300 (TEGK…MLAE), and 302–339 (PEGR…VIEW).

The protein belongs to the flagellar radial spoke RSP14 family. As to quaternary structure, component of the axonemal radial spoke complex 1 (RS1), at least composed of spoke head proteins RSPH1, RSPH3, RSPH9 and the cilia-specific component RSPH4A or sperm-specific component RSPH6A, spoke stalk proteins RSPH14, DNAJB13, DYDC1, ROPN1L and NME5, and the anchor protein IQUB.

It localises to the cytoplasm. The protein localises to the cytoskeleton. The protein resides in the flagellum axoneme. Functionally, functions as part of axonemal radial spoke complexes that play an important part in the motility of sperm and cilia. This is Radial spoke head 14 homolog from Mus musculus (Mouse).